A 399-amino-acid chain; its full sequence is S-adenosylmethionine synthase (399 aa).

H17 lines the ATP pocket. D19 serves as a coordination point for Mg(2+). Residue E45 participates in K(+) binding. E58 and Q101 together coordinate L-methionine. The interval 101–111 (QSADIAMGVDQ) is flexible loop. ATP contacts are provided by residues 177 to 179 (DGK), 244 to 245 (RF), D253, 259 to 260 (RK), A276, and K280. L-methionine is bound at residue D253. K284 contacts L-methionine.

Belongs to the AdoMet synthase family. Homotetramer; dimer of dimers. Mg(2+) is required as a cofactor. The cofactor is K(+).

The protein localises to the cytoplasm. It carries out the reaction L-methionine + ATP + H2O = S-adenosyl-L-methionine + phosphate + diphosphate. It functions in the pathway amino-acid biosynthesis; S-adenosyl-L-methionine biosynthesis; S-adenosyl-L-methionine from L-methionine: step 1/1. Its function is as follows. Catalyzes the formation of S-adenosylmethionine (AdoMet) from methionine and ATP. The overall synthetic reaction is composed of two sequential steps, AdoMet formation and the subsequent tripolyphosphate hydrolysis which occurs prior to release of AdoMet from the enzyme. The protein is S-adenosylmethionine synthase of Bacillus cereus (strain ATCC 10987 / NRS 248).